The primary structure comprises 348 residues: Enkurin domain-containing protein 1 (348 aa).

3 disordered regions span residues 1 to 65 (MCEG…RPGG), 84 to 195 (GGIS…PSAK), and 262 to 282 (AEAR…TRMP). A Phosphoserine modification is found at Ser93. A compositionally biased stretch (basic and acidic residues) spans 95–127 (KRKDPKDHEKENMRRIREIQRRFREQEHSREQG). Ser138 is subject to Phosphoserine. Basic and acidic residues predominate over residues 139 to 148 (PKYDKVESRV). The Enkurin domain maps to 253–345 (ERRDLWRREA…IFSRPKVFVK (93 aa)).

In terms of assembly, interacts with alpha-tubulin. Interacts (via central region) with CCP110 (via N-terminal region); competes with CEP97 for binding to CCP110.

It is found in the cytoplasm. It localises to the cytoskeleton. Its subcellular location is the microtubule organizing center. The protein resides in the centrosome. The protein localises to the centriole. It is found in the cilium basal body. It localises to the cell projection. Its subcellular location is the cilium. The protein resides in the spindle. The protein localises to the spindle pole. It is found in the cilium axoneme. Its function is as follows. Microtubule-binding protein which regulates microtubule organization and stability. Promotes the stability of astral microtubules and facilitates the proper orientation of the mitotic spindle. This allows the oriented division of basal keratinocytes and contributes to epidermal stratification. Required for the assembly of both primary and motile cilia. Destabilizes the interaction between CCP110 and CEP97 by competing with CEP97 for binding to CCP110 which promotes the removal of CCP110 and CEP97 from the mother centriole and allows the initiation of ciliogenesis. This is Enkurin domain-containing protein 1 (ENKD1) from Bos taurus (Bovine).